A 59-amino-acid polypeptide reads, in one-letter code: UPF0434 protein PBPRA2383 (59 aa).

This sequence belongs to the UPF0434 family.

The chain is UPF0434 protein PBPRA2383 from Photobacterium profundum (strain SS9).